Consider the following 148-residue polypeptide: L-alanine exporter AlaE (148 aa).

Transmembrane regions (helical) follow at residues 18–38, 49–69, 88–108, and 115–135; these read FALVVYCFVIGMIIEIVISGM, VSIPVNILIAWPYGLYRDAFI, LLAYVSFQSPVYALILWSVGA, and TAVASNALVSMAMGVAYGYFL.

The protein belongs to the AlaE exporter family.

Its subcellular location is the cell inner membrane. Functionally, exports L-alanine. The chain is L-alanine exporter AlaE from Yersinia enterocolitica subsp. palearctica serotype O:3 (strain DSM 13030 / CIP 106945 / Y11).